We begin with the raw amino-acid sequence, 90 residues long: U7-theraphotoxin-Hhn1h (90 aa).

Residues 1–19 (MKTAIFTVVLALAVFAVLS) form the signal peptide. A propeptide spanning residues 20 to 50 (FGWEANEKALSEEFTELIHEKEAASETEARE) is cleaved from the precursor. Intrachain disulfides connect cysteine 51–cysteine 65, cysteine 58–cysteine 70, and cysteine 64–cysteine 81.

This sequence belongs to the neurotoxin 10 (Hwtx-1) family. 13 (Hntx-13) subfamily. As to expression, expressed by the venom gland.

It localises to the secreted. Its function is as follows. Ion channel inhibitor. This is U7-theraphotoxin-Hhn1h from Cyriopagopus hainanus (Chinese bird spider).